Reading from the N-terminus, the 503-residue chain is Asparagine--tRNA ligase (503 aa).

The protein belongs to the class-II aminoacyl-tRNA synthetase family. Homodimer.

Its subcellular location is the cytoplasm. It carries out the reaction tRNA(Asn) + L-asparagine + ATP = L-asparaginyl-tRNA(Asn) + AMP + diphosphate + H(+). In Aster yellows witches'-broom phytoplasma (strain AYWB), this protein is Asparagine--tRNA ligase.